Here is a 76-residue protein sequence, read N- to C-terminus: Repressor protein of division inhibition gene dicB (76 aa).

A DNA-binding region spans residues 13-33 (KTKLAQAAGIRLASLYSWKGD).

Its function is as follows. This protein is a repressor of division inhibition gene dicB. The sequence is that of Repressor protein of division inhibition gene dicB (dicC) from Escherichia coli (strain K12).